The sequence spans 564 residues: Potassium-transporting ATPase potassium-binding subunit (564 aa).

The next 10 membrane-spanning stretches (helical) occupy residues 7-27 (LLILAFLVLLLAPAPWLGRFF), 67-87 (AWALLAFNLAGFVVLFAMLML), 135-155 (VGLTVQNFVSAATGLAVLVAL), 179-199 (LYALLPISIVLAVFLVWQGVP), 258-278 (FELVSILLIPAALVFTFGHYV), 286-306 (AILGCMLALLLIGGAVSLWAE), 382-402 (VGLNGMVLNVLIAVFLAGLMI), 420-440 (LLVATLLVMPVGVLVLGAIAA), 487-507 (LMLSLAIFIGRFGYILPVLAL), and 528-548 (GLLFVTLLTVTILLVGGLTFL).

It belongs to the KdpA family. In terms of assembly, the system is composed of three essential subunits: KdpA, KdpB and KdpC.

It is found in the cell inner membrane. Its function is as follows. Part of the high-affinity ATP-driven potassium transport (or Kdp) system, which catalyzes the hydrolysis of ATP coupled with the electrogenic transport of potassium into the cytoplasm. This subunit binds the periplasmic potassium ions and delivers the ions to the membrane domain of KdpB through an intramembrane tunnel. This is Potassium-transporting ATPase potassium-binding subunit from Pseudomonas syringae pv. tomato (strain ATCC BAA-871 / DC3000).